Consider the following 308-residue polypeptide: Aspartate carbamoyltransferase catalytic subunit (308 aa).

Arginine 55 and threonine 56 together coordinate carbamoyl phosphate. An L-aspartate-binding site is contributed by lysine 83. Carbamoyl phosphate contacts are provided by arginine 105, histidine 133, and glutamine 136. L-aspartate-binding residues include arginine 166 and arginine 220. Glycine 261 and proline 262 together coordinate carbamoyl phosphate.

This sequence belongs to the aspartate/ornithine carbamoyltransferase superfamily. ATCase family. As to quaternary structure, heterododecamer (2C3:3R2) of six catalytic PyrB chains organized as two trimers (C3), and six regulatory PyrI chains organized as three dimers (R2).

It carries out the reaction carbamoyl phosphate + L-aspartate = N-carbamoyl-L-aspartate + phosphate + H(+). Its pathway is pyrimidine metabolism; UMP biosynthesis via de novo pathway; (S)-dihydroorotate from bicarbonate: step 2/3. Catalyzes the condensation of carbamoyl phosphate and aspartate to form carbamoyl aspartate and inorganic phosphate, the committed step in the de novo pyrimidine nucleotide biosynthesis pathway. The protein is Aspartate carbamoyltransferase catalytic subunit of Chlorobaculum tepidum (strain ATCC 49652 / DSM 12025 / NBRC 103806 / TLS) (Chlorobium tepidum).